The primary structure comprises 122 residues: MHSFNKDIGSLGEDIAKNYLNQIGYTVLERNFRCKVGEIDIIGKDGDYICFIEVKSRYGKLYGNPCESVNYPKRLKIYKAANIYMLRKKLFKFNFRFDVIEIIFNTYNDVPSIKLIKDAFQI.

It belongs to the UPF0102 family.

The sequence is that of UPF0102 protein CKL_1410 from Clostridium kluyveri (strain ATCC 8527 / DSM 555 / NBRC 12016 / NCIMB 10680 / K1).